The following is a 637-amino-acid chain: Chaperone protein HtpG (637 aa).

Residues 1-345 (MSQQETHGFQ…SNDLPLNVSR (345 aa)) form an a; substrate-binding region. The segment at 346–562 (EILQDNHITK…EGEMSTQMIK (217 aa)) is b. Residues 563–637 (LMQAAGQPVP…MNQMLLANLK (75 aa)) form a c region.

Belongs to the heat shock protein 90 family. Homodimer.

It is found in the cytoplasm. In terms of biological role, molecular chaperone. Has ATPase activity. The chain is Chaperone protein HtpG from Shewanella oneidensis (strain ATCC 700550 / JCM 31522 / CIP 106686 / LMG 19005 / NCIMB 14063 / MR-1).